Consider the following 273-residue polypeptide: 4-hydroxy-tetrahydrodipicolinate reductase (273 aa).

NAD(+)-binding positions include 12 to 17 (GAGGRM) and E38. R39 serves as a coordination point for NADP(+). NAD(+)-binding positions include 102–104 (GTT) and 126–129 (AANF). The active-site Proton donor/acceptor is H159. Residue H160 participates in (S)-2,3,4,5-tetrahydrodipicolinate binding. The Proton donor role is filled by K163. 169–170 (GT) lines the (S)-2,3,4,5-tetrahydrodipicolinate pocket.

Belongs to the DapB family. As to quaternary structure, homotetramer.

The protein localises to the cytoplasm. It carries out the reaction (S)-2,3,4,5-tetrahydrodipicolinate + NAD(+) + H2O = (2S,4S)-4-hydroxy-2,3,4,5-tetrahydrodipicolinate + NADH + H(+). The enzyme catalyses (S)-2,3,4,5-tetrahydrodipicolinate + NADP(+) + H2O = (2S,4S)-4-hydroxy-2,3,4,5-tetrahydrodipicolinate + NADPH + H(+). Its pathway is amino-acid biosynthesis; L-lysine biosynthesis via DAP pathway; (S)-tetrahydrodipicolinate from L-aspartate: step 4/4. Functionally, catalyzes the conversion of 4-hydroxy-tetrahydrodipicolinate (HTPA) to tetrahydrodipicolinate. This is 4-hydroxy-tetrahydrodipicolinate reductase from Yersinia pestis bv. Antiqua (strain Antiqua).